A 1034-amino-acid polypeptide reads, in one-letter code: N-acetyl-beta-glucosaminyl-glycoprotein 4-beta-N-acetylgalactosaminyltransferase 1 (1034 aa).

Topologically, residues 1-12 (MPWFPVKKVRKQ) are cytoplasmic. A helical; Signal-anchor for type II membrane protein transmembrane segment spans residues 13-31 (MKLLLLLLLLTCAAWLTYV). At 32–1034 (HRSLVRPGRA…SRKGARAQRS (1003 aa)) the chain is on the lumenal side. Residues 51 to 104 (DGEKLTGVTDSRGVRVPSSTQRSEDSSESHEEEQAPEGRGPNMLFPGGPRKPPP) form a disordered region. Over residues 72 to 83 (RSEDSSESHEEE) the composition is skewed to basic and acidic residues. Asparagine 106 carries N-linked (GlcNAc...) asparagine glycosylation. Residues 109–279 (HQTPPWREEF…LKFEIIDSAH (171 aa)) form the PA14 domain. Disordered regions lie at residues 450 to 486 (PTDA…DEQT) and 556 to 600 (RVQL…QLHG). Over residues 461–473 (TPTPAASTGTTAS) the composition is skewed to low complexity. Asparagine 611 carries N-linked (GlcNAc...) asparagine glycosylation. Disordered regions lie at residues 626–669 (SQVS…PLGR) and 782–801 (GDED…HPDS). Acidic residues predominate over residues 636–661 (EGEEGEEDGAPGDEATSEDSEEEEEP).

This sequence belongs to the chondroitin N-acetylgalactosaminyltransferase family.

It is found in the golgi apparatus. It localises to the golgi stack membrane. The enzyme catalyses an N-acetyl-beta-D-glucosaminyl derivative + UDP-N-acetyl-alpha-D-galactosamine = an N-acetyl-beta-D-galactosaminyl-(1-&gt;4)-N-acetyl-beta-D-glucosaminyl derivative + UDP + H(+). Transfers N-acetylgalactosamine (GalNAc) from UDP-GalNAc to N-acetylglucosamine-beta-benzyl with a beta-1,4-linkage to form N,N'-diacetyllactosediamine, GalNAc-beta-1,4-GlcNAc structures in N-linked glycans and probably O-linked glycans. The chain is N-acetyl-beta-glucosaminyl-glycoprotein 4-beta-N-acetylgalactosaminyltransferase 1 (B4galnt4) from Mus musculus (Mouse).